We begin with the raw amino-acid sequence, 73 residues long: MEQLKTAANPNQAKIDNATKSYETAKNELVSTWKGTAGSVSVGNKIRGITHQITGVAAGTLSRTICCCSWSSL.

This is an uncharacterized protein from Haemophilus influenzae (strain ATCC 51907 / DSM 11121 / KW20 / Rd).